Reading from the N-terminus, the 444-residue chain is MPCDRKTSPDQHHALQIHRHHHRRKIRARVDAMQSWSAPSVPALPGRGPQLRLFDSADRQIRPVSPGATATMYVCGITPYDATHLGHAATYLTFDLVNRVWRDSGHDVHYVQNITDVDDPLFERAARDGIGWRELGDRETDLFREDMAALRVVPPRDYVAATEAIAEVIEVVEKLLASGAAYVVDDAQYPDVYFHAGATVQFGYESGYDRETMLALFAERGGDPDRPGKSDPLDALLWRAERPEEPSWPSPFGPGRPGWHVECAAIAMTRIGNVLDIQGGGSDLIFPHHEFSSAHAECVSGERRFARHYVHAGMIGWDGHKMSKSRGNLVLVSQLRRDGVDPGAIRLGLFAGHYRQDRYWSPAVLDEAQQRLHRWRSATALDGAPDATDVVARVRRYLADDLDTPKALAAIDGWAEDTLSYGGHDRTAGPTVSAAVDALLGVAL.

Residues 1 to 13 (MPCDRKTSPDQHH) are compositionally biased toward basic and acidic residues. Residues 1-21 (MPCDRKTSPDQHHALQIHRHH) are disordered. Cys-75 contacts Zn(2+). L-cysteinyl-5'-AMP-binding positions include 75–78 (CGIT), Thr-90, and 113–115 (NIT). A 'HIGH' region motif is present at residues 77–87 (ITPYDATHLGH). Positions 219–224 (ERGGDP) match the 'ERGGDP' region motif. Trp-259 provides a ligand contact to L-cysteinyl-5'-AMP. Cys-263 contributes to the Zn(2+) binding site. 281-283 (GSD) provides a ligand contact to L-cysteinyl-5'-AMP. Zn(2+) is bound at residue His-288. Ile-315 provides a ligand contact to L-cysteinyl-5'-AMP. The 'KMSKS' region motif lies at 321-325 (KMSKS).

It belongs to the class-I aminoacyl-tRNA synthetase family. MshC subfamily. As to quaternary structure, monomer. The cofactor is Zn(2+).

It carries out the reaction 1D-myo-inositol 2-amino-2-deoxy-alpha-D-glucopyranoside + L-cysteine + ATP = 1D-myo-inositol 2-(L-cysteinylamino)-2-deoxy-alpha-D-glucopyranoside + AMP + diphosphate + H(+). Functionally, catalyzes the ATP-dependent condensation of GlcN-Ins and L-cysteine to form L-Cys-GlcN-Ins. The chain is L-cysteine:1D-myo-inositol 2-amino-2-deoxy-alpha-D-glucopyranoside ligase from Mycolicibacterium gilvum (strain PYR-GCK) (Mycobacterium gilvum (strain PYR-GCK)).